We begin with the raw amino-acid sequence, 91 residues long: MDIKLINIGFGNIVSANRIISIVSPESAPIKRIIQEARDAGMLIDATYGRRTRAVIICDSHHVILSAVQPETVAHRLSAKEASNTAEDPAD.

The protein belongs to the RemA family.

The protein is Putative regulatory protein DSY2730 of Desulfitobacterium hafniense (strain Y51).